Here is a 414-residue protein sequence, read N- to C-terminus: Probable uracil permease (414 aa).

Over 1–14 the chain is Cytoplasmic; sequence MTNQIPPSLAENQS. A helical membrane pass occupies residues 15 to 38; it reads KLKQSFVGLQMLFVAFGALVLVPL. The Periplasmic portion of the chain corresponds to 39 to 42; sequence ITGL. A helical membrane pass occupies residues 43-62; it reads DSNTALLTAGVGTLLFQFCT. Residues 63–65 are Cytoplasmic-facing; it reads GKQ. A discontinuously helical membrane pass occupies residues 66–82; the sequence is VPIFLASSFAFIAPIQY. Phe-74 serves as a coordination point for uracil. At 83–91 the chain is on the periplasmic side; sequence GVQTWGIAT. Residues 92-112 traverse the membrane as a helical segment; the sequence is TMGGLAFTGLVYFALSTLVKL. Topologically, residues 113 to 124 are cytoplasmic; it reads RGAEALQRFFPP. Residues 125 to 146 form a helical membrane-spanning segment; it reads VVVGPVIIIIGMGLAPIAVDMS. Residues 147-155 are Periplasmic-facing; the sequence is LGKNSAYAY. The chain crosses the membrane as a helical span at residues 156–171; the sequence is NDAVLVSMVTLLTTLS. Residues 172–178 are Cytoplasmic-facing; the sequence is VAVFAKG. The helical transmembrane segment at 179 to 199 threads the bilayer; sequence LMKLIPIMFGITAGYILCLFL. Residues 200–224 are Periplasmic-facing; it reads GLINFQPVIDAPWFSLPKLTTPEFN. A helical transmembrane segment spans residues 225-248; that stretch reads LEAILYMLPIAIAPAVEHVGGIMA. Glu-241 contributes to the uracil binding site. Residues 249–261 are Cytoplasmic-facing; it reads ISSVTGKDFLKKP. The helical transmembrane segment at 262–281 threads the bilayer; that stretch reads GLHRTLLGDGIATAAASLVG. A discontinuously helical membrane pass occupies residues 282-298; it reads GPPNTTYAEVTGAVMLT. Glu-290 is a uracil binding site. Residues 299 to 301 lie on the Cytoplasmic side of the membrane; sequence RNF. A helical transmembrane segment spans residues 302–319; sequence NPNIMTWAAVWAIAISFC. At 320–332 the chain is on the periplasmic side; it reads GKVGAFLSTIPTI. Residues 333 to 354 traverse the membrane as a helical segment; sequence VMGGIMMLVFGSIAVVGMSTLI. Topologically, residues 355-365 are cytoplasmic; it reads RGKVDVTEARN. An intramembrane region (discontinuously helical) is located at residues 366–401; sequence LCIISVVMTFGIGNMFVDVGNVSLKGISLCAIVAII. The Cytoplasmic portion of the chain corresponds to 402–414; it reads LNLVLPKAKNEVE.

The protein belongs to the nucleobase:cation symporter-2 (NCS2) (TC 2.A.40) family.

The protein localises to the cell inner membrane. The catalysed reaction is uracil(in) + H(+)(in) = uracil(out) + H(+)(out). In terms of biological role, transport of uracil in the cell. This is Probable uracil permease (uraA) from Haemophilus influenzae (strain ATCC 51907 / DSM 11121 / KW20 / Rd).